Reading from the N-terminus, the 306-residue chain is Pantothenate kinase (306 aa).

91–98 is a binding site for ATP; it reads GSVAVGKS.

The protein belongs to the prokaryotic pantothenate kinase family.

It localises to the cytoplasm. It catalyses the reaction (R)-pantothenate + ATP = (R)-4'-phosphopantothenate + ADP + H(+). The protein operates within cofactor biosynthesis; coenzyme A biosynthesis; CoA from (R)-pantothenate: step 1/5. The protein is Pantothenate kinase of Streptococcus equi subsp. zooepidemicus (strain H70).